Here is a 106-residue protein sequence, read N- to C-terminus: UPF0060 membrane protein CHU_3331 (106 aa).

4 consecutive transmembrane segments (helical) span residues Phe-5–Phe-25, Ala-31–Ile-51, Ala-59–Glu-79, and Ile-85–Pro-105.

Belongs to the UPF0060 family.

The protein localises to the cell inner membrane. In Cytophaga hutchinsonii (strain ATCC 33406 / DSM 1761 / CIP 103989 / NBRC 15051 / NCIMB 9469 / D465), this protein is UPF0060 membrane protein CHU_3331.